Reading from the N-terminus, the 120-residue chain is UPF0231 protein YacL (120 aa).

Belongs to the UPF0231 family.

The polypeptide is UPF0231 protein YacL (Escherichia coli O6:K15:H31 (strain 536 / UPEC)).